Here is a 491-residue protein sequence, read N- to C-terminus: MPALMVVGCTSHAGKSLITAAICRLLRRQGWRVAPFKGQNMALNAYVTASGGEIGYAQAFQAWAAGVEPTIEMNPILLKPQGDMTSQVVLKGRAVGRTLAERYYQDYFEVGWEAICEALEQLQADYDWIVCEGAGSPAEINLKHRDLTNLRVAKHLQAPTLLLVDIDRGGSFAHLIGTLELLDPDERSLIRGFVFNKFRGRRELLQSGLDWLEERTGIPVLGVIPWIDRAFPSEDSLDLMERRRRKTQAEVTIAVIRLPRIANFTDFDPLESEPSVQVRYVGLQDELGYPDAVILPGSKTTISDLLDLQRSGLAQAIRDYAAAGGTVLGICGGFQMMGQHILDLEGTEGIEGQFEGLHLFPTQTWFTAEKTLRQRQTTARSPQAGLPITGYEIHQGQTRLDSDSEEFLPIFDDPKLGLCDRNGNLWGTYLHGIFDNGAWRRAWLNSLRHRRGLKALPTSIGHYQAQRDDLIDALSDAVEPYLNLSPLLTAL.

One can recognise a GATase cobBQ-type domain in the interval 250-439 (EVTIAVIRLP…LHGIFDNGAW (190 aa)). The active-site Nucleophile is Cys331. His431 is an active-site residue.

The protein belongs to the CobB/CobQ family. CobQ subfamily.

It participates in cofactor biosynthesis; adenosylcobalamin biosynthesis. In terms of biological role, catalyzes amidations at positions B, D, E, and G on adenosylcobyrinic A,C-diamide. NH(2) groups are provided by glutamine, and one molecule of ATP is hydrogenolyzed for each amidation. This Synechococcus sp. (strain ATCC 27144 / PCC 6301 / SAUG 1402/1) (Anacystis nidulans) protein is Cobyric acid synthase.